Consider the following 119-residue polypeptide: uncharacterized protein (119 aa).

In terms of domain architecture, ABC transmembrane type-1 spans 1 to 112 (MVFNMRSTRG…FISSCLLLVL (112 aa)). 2 consecutive transmembrane segments (helical) span residues 51-73 (VLAWSRAIGEFGATLMLAGATRF) and 91-111 (FEIAIGASLWLLFISSCLLLV).

It belongs to the binding-protein-dependent transport system permease family. CysTW subfamily.

It localises to the cell membrane. This is an uncharacterized protein from Haemophilus influenzae (strain ATCC 51907 / DSM 11121 / KW20 / Rd).